The chain runs to 255 residues: 5'-nucleotidase SurE (255 aa).

Residues Asp-8, Asp-9, Ser-40, and Asn-92 each coordinate a divalent metal cation.

It belongs to the SurE nucleotidase family. The cofactor is a divalent metal cation.

It is found in the cytoplasm. The catalysed reaction is a ribonucleoside 5'-phosphate + H2O = a ribonucleoside + phosphate. Nucleotidase that shows phosphatase activity on nucleoside 5'-monophosphates. In Brucella canis (strain ATCC 23365 / NCTC 10854 / RM-666), this protein is 5'-nucleotidase SurE.